Reading from the N-terminus, the 816-residue chain is S-layer protein (816 aa).

The first 29 residues, 1–29 (MAKTNSYKKVIAGTMTAAMVAGVVSPVAA), serve as a signal peptide directing secretion. SLH domains lie at 30–93 (AGKS…DAKP), 94–150 (SFAD…KVNG), and 152–215 (PATK…VAKV). One can recognise a BIG2 domain in the interval 403–480 (FTSKDFKQND…TVKDSKGKEL (78 aa)).

The protein localises to the secreted. Its subcellular location is the cell wall. It is found in the S-layer. In terms of biological role, the S-layer is a paracrystalline mono-layered assembly of proteins which coat the surface of bacteria. This Bacillus thuringiensis subsp. finitimus protein is S-layer protein.